The chain runs to 80 residues: FXYD domain-containing ion transport regulator 7 (80 aa).

The Extracellular portion of the chain corresponds to 1 to 22; it reads MATPTQSPTNVPEETDPFFYDY. 3 O-linked (GlcNAc) threonine glycosylation sites follow: Thr-3, Thr-5, and Thr-9. Residues 23 to 45 form a helical membrane-spanning segment; sequence ATVQTVGMTLATIMFVLGIIIIL. Residues 46–80 lie on the Cytoplasmic side of the membrane; that stretch reads SKKVKCRKADSRSESPTCKSCKSELPSSAPGGGGV. The tract at residues 55-80 is disordered; the sequence is DSRSESPTCKSCKSELPSSAPGGGGV. At Ser-73 the chain carries Phosphoserine.

The protein belongs to the FXYD family. As to quaternary structure, regulatory subunit of the sodium/potassium-transporting ATPase which is composed of a catalytic alpha subunit, a non-catalytic beta subunit and an additional regulatory subunit. The regulatory subunit, a member of the FXYD protein family, modulates the enzymatic activity in a tissue- and isoform-specific way by changing affinities of the Na+/K+-ATPase toward Na(+), K(+) or ATP. In terms of processing, O-glycosylated; required for stabilization and translocation to the plasma membrane.

It is found in the cell membrane. Its function is as follows. Associates with and regulates the activity of the sodium/potassium-transporting ATPase (NKA) which catalyzes the hydrolysis of ATP coupled with the exchange of Na(+) and K(+) ions across the plasma membrane. Reduces the apparent affinity for external K(+), an effect that depends on the presence of external Na(+) and voltage. Increases the apparent affinity for intracellular Na(+). This chain is FXYD domain-containing ion transport regulator 7 (Fxyd7), found in Mus musculus (Mouse).